A 200-amino-acid polypeptide reads, in one-letter code: Recombination protein RecR (200 aa).

The segment at 59–74 (CDICGNVCETSPCPVC) adopts a C4-type zinc-finger fold. The Toprim domain occupies 82 to 177 (SVICVVEEPK…KVTRLASGLP (96 aa)).

It belongs to the RecR family.

Functionally, may play a role in DNA repair. It seems to be involved in an RecBC-independent recombinational process of DNA repair. It may act with RecF and RecO. The polypeptide is Recombination protein RecR (Bifidobacterium adolescentis (strain ATCC 15703 / DSM 20083 / NCTC 11814 / E194a)).